Here is a 492-residue protein sequence, read N- to C-terminus: UDP-N-acetylmuramoyl-L-alanyl-D-glutamate--2,6-diaminopimelate ligase (492 aa).

Ser-30 lines the UDP-N-acetyl-alpha-D-muramoyl-L-alanyl-D-glutamate pocket. 114–120 contributes to the ATP binding site; the sequence is GTNGKTS. UDP-N-acetyl-alpha-D-muramoyl-L-alanyl-D-glutamate contacts are provided by residues 156–157, Ser-183, Gln-189, and Arg-191; that span reads TT. Position 223 is an N6-carboxylysine (Lys-223). Residues Arg-389, 413-416, Gly-462, and Glu-466 each bind meso-2,6-diaminopimelate; that span reads DNPR. The Meso-diaminopimelate recognition motif motif lies at 413-416; the sequence is DNPR.

It belongs to the MurCDEF family. MurE subfamily. Mg(2+) serves as cofactor. Carboxylation is probably crucial for Mg(2+) binding and, consequently, for the gamma-phosphate positioning of ATP.

It localises to the cytoplasm. It carries out the reaction UDP-N-acetyl-alpha-D-muramoyl-L-alanyl-D-glutamate + meso-2,6-diaminopimelate + ATP = UDP-N-acetyl-alpha-D-muramoyl-L-alanyl-gamma-D-glutamyl-meso-2,6-diaminopimelate + ADP + phosphate + H(+). It functions in the pathway cell wall biogenesis; peptidoglycan biosynthesis. In terms of biological role, catalyzes the addition of meso-diaminopimelic acid to the nucleotide precursor UDP-N-acetylmuramoyl-L-alanyl-D-glutamate (UMAG) in the biosynthesis of bacterial cell-wall peptidoglycan. This chain is UDP-N-acetylmuramoyl-L-alanyl-D-glutamate--2,6-diaminopimelate ligase, found in Neisseria meningitidis serogroup A / serotype 4A (strain DSM 15465 / Z2491).